Reading from the N-terminus, the 687-residue chain is Epithelial splicing regulatory protein 1 (687 aa).

3 RRM domains span residues 226–303 (TIIR…KATG), 327–407 (VIVR…RSTA), and 446–526 (DCIR…QCSA).

The protein belongs to the ESRP family.

It is found in the nucleus. Its function is as follows. mRNA splicing factor that regulates the formation of epithelial cell-specific isoforms. Specifically regulates the expression of FGFR2-IIIb, an epithelial cell-specific isoform of fgfr2. Acts by directly binding specific sequences in mRNAs. Binds the GU-rich sequence motifs in the ISE/ISS-3, a cis-element regulatory region present in the mRNA of fgfr2. This is Epithelial splicing regulatory protein 1 (esrp1) from Xenopus tropicalis (Western clawed frog).